Reading from the N-terminus, the 568-residue chain is Keratin, type I cytoskeletal 10 (568 aa).

Residues 1 to 15 (MSVRYSSSKQYSSSR) are compositionally biased toward low complexity. The tract at residues 1-31 (MSVRYSSSKQYSSSRSGGGGGGGGGSSFRIS) is disordered. A head region spans residues 1–135 (MSVRYSSSKQ…GGDGGLLSGN (135 aa)). 6 positions are modified to phosphoserine: Ser14, Ser16, Ser36, Ser47, Ser50, and Ser160. Gly residues predominate over residues 16–26 (SGGGGGGGGGS). The tract at residues 136 to 171 (EKVTMQNLNDRLASYLDKVRALEESNYELEGKIKEW) is coil 1A. In terms of domain architecture, IF rod spans 136–450 (EKVTMQNLND…SLLEGEGSSG (315 aa)). Positions 172–192 (YEKHGNSSQRAPRDYSKYYQT) are linker 1. The tract at residues 193-284 (IEDLKNQILN…KNHEEEMRDL (92 aa)) is coil 1B. Residues 285–307 (QNVSTGDVNVEMNAAPGVDLTEL) form a linker 12 region. The segment at 308–446 (LNNMRNQYEQ…QTYRSLLEGE (139 aa)) is coil 2. A tail region spans residues 447-568 (GSSGGGGYGG…GESSSKGPRY (122 aa)). Positions 485-546 (GGGSSGGGGH…GGGYGGGSSS (62 aa)) are enriched in gly residues. The tract at residues 485–568 (GGGSSGGGGH…GESSSKGPRY (84 aa)) is disordered. The span at 547-568 (SGGHKSSSSGSVGESSSKGPRY) shows a compositional bias: low complexity.

The protein belongs to the intermediate filament family. In terms of assembly, heterotetramer of two type I and two type II keratins. Heterodimer with KRT1. Two heterodimers of KRT1 and KRT10 form a heterotetramer. The KRT10 subunit in the heterotetramer is probably disulfide-linked. As to expression, expressed in skin.

It localises to the secreted. The protein resides in the extracellular space. The protein localises to the cell surface. Its subcellular location is the cytoplasm. In terms of biological role, plays a role in the establishment of the epidermal barrier on plantar skin. Involved in the maintenance of cell layer development and keratin filament bundles in suprabasal cells of the epithelium. This chain is Keratin, type I cytoskeletal 10, found in Canis lupus familiaris (Dog).